Consider the following 147-residue polypeptide: uncharacterized protein (147 aa).

This is an uncharacterized protein from Mycoplasma genitalium (strain ATCC 33530 / DSM 19775 / NCTC 10195 / G37) (Mycoplasmoides genitalium).